The sequence spans 124 residues: Small ribosomal subunit protein uS12 (124 aa).

The tract at residues 105–124 is disordered; that stretch reads QGVKNRKQARSRYGAKKEKG. Basic residues predominate over residues 108 to 118; it reads KNRKQARSRYG.

This sequence belongs to the universal ribosomal protein uS12 family. In terms of assembly, part of the 30S ribosomal subunit. Contacts proteins S8 and S17. May interact with IF1 in the 30S initiation complex.

In terms of biological role, with S4 and S5 plays an important role in translational accuracy. Interacts with and stabilizes bases of the 16S rRNA that are involved in tRNA selection in the A site and with the mRNA backbone. Located at the interface of the 30S and 50S subunits, it traverses the body of the 30S subunit contacting proteins on the other side and probably holding the rRNA structure together. The combined cluster of proteins S8, S12 and S17 appears to hold together the shoulder and platform of the 30S subunit. This Mycobacterium bovis (strain ATCC BAA-935 / AF2122/97) protein is Small ribosomal subunit protein uS12 (rpsL).